The chain runs to 148 residues: UPF0756 membrane protein CKO_01811 (148 aa).

4 helical membrane-spanning segments follow: residues 14-34, 51-71, 86-106, and 121-141; these read ALGF…LIIV, LTVG…SGSL, LVAI…VTLM, and VLGV…AGLV.

Belongs to the UPF0756 family.

It is found in the cell membrane. This chain is UPF0756 membrane protein CKO_01811, found in Citrobacter koseri (strain ATCC BAA-895 / CDC 4225-83 / SGSC4696).